We begin with the raw amino-acid sequence, 247 residues long: UPF0280 protein MmarC5_0355 (247 aa).

This sequence belongs to the UPF0280 family.

The protein is UPF0280 protein MmarC5_0355 of Methanococcus maripaludis (strain C5 / ATCC BAA-1333).